A 397-amino-acid polypeptide reads, in one-letter code: Torsin-3A (397 aa).

Positions 1-25 are cleaved as a signal peptide; sequence MLRGPWRQLWLFFLLLLPGAPEPRG. Asparagine 122 carries N-linked (GlcNAc...) asparagine glycosylation. 167–174 contacts ATP; the sequence is GWSGTGKN.

The protein belongs to the ClpA/ClpB family. Torsin subfamily. In terms of assembly, may not form homohexamers. In terms of processing, N-glycosylated. In terms of tissue distribution, ubiquitously expressed. Highest expression in stomach, salivary glands and lymph nodes. Isoform 2 is expressed in placenta.

The protein localises to the cytoplasm. It localises to the endoplasmic reticulum lumen. The protein is Torsin-3A (TOR3A) of Homo sapiens (Human).